The following is a 144-amino-acid chain: Ribosomal RNA large subunit methyltransferase H (144 aa).

S-adenosyl-L-methionine-binding positions include Leu-63, Gly-92, and Leu-111 to Phe-116.

It belongs to the RNA methyltransferase RlmH family. Homodimer.

Its subcellular location is the cytoplasm. It carries out the reaction pseudouridine(1915) in 23S rRNA + S-adenosyl-L-methionine = N(3)-methylpseudouridine(1915) in 23S rRNA + S-adenosyl-L-homocysteine + H(+). In terms of biological role, specifically methylates the pseudouridine at position 1915 (m3Psi1915) in 23S rRNA. This is Ribosomal RNA large subunit methyltransferase H from Synechococcus sp. (strain CC9902).